A 1331-amino-acid polypeptide reads, in one-letter code: Disease resistance protein RUN1 (1331 aa).

The interval 1–20 (MASTSSSRASSSSSSSSTPS) is disordered. A TIR domain is found at 25–190 (ITYDVFLSFR…EITDSIFRRL (166 aa)). NAD(+)-binding positions include 34–39 (RGEDTR) and Gly-66. The active site involves Glu-100. Residues 206–434 (SHVKEMIWRL…REPEAEILSV (229 aa)) form the NB-ARC domain. LRR repeat units lie at residues 429–452 (AEIL…IFLD), 480–509 (IKNL…GWEI), 540–565 (IKRV…AFAK), 616–638 (SYEL…NFDG), 648–673 (CSNI…SYSR), 684–708 (MPNL…VGNM), 709–732 (KKLT…IGDL), 734–756 (SLEI…GGNM), 757–779 (KSLT…IGDL), 781–803 (SLKY…GGNM), 804–826 (KSLR…IRDL), 828–850 (SLER…GGNM), 851–873 (KSLM…IGDL), 875–897 (SLKY…GGNM), 898–920 (KSLT…IGDL), 922–944 (SLVS…GGNM), 945–967 (KSLN…IGDL), 969–991 (SLMR…VGNM), 992–1014 (KSLE…IGDL), and 1017–1040 (LEKL…AIDA). Residues 1287–1291 (RKRRR) carry the Nuclear localization signal motif.

Belongs to the disease resistance TIR-NB-LRR family.

Its subcellular location is the nucleus. The protein localises to the cytoplasm. The catalysed reaction is NAD(+) + H2O = ADP-D-ribose + nicotinamide + H(+). It carries out the reaction NADP(+) + H2O = ADP-D-ribose 2'-phosphate + nicotinamide + H(+). Its function is as follows. Disease resistance (R) protein that confers resistance to multiple powdery and downy mildew by promoting cell death. Acts as a NAD(+) hydrolase (NADase): in response to activation, catalyzes cleavage of NAD(+) into ADP-D-ribose (ADPR) and nicotinamide; NAD(+) cleavage triggering a defense system that promotes cell death. Also able to hydrolyze NADP(+), but not other NAD(+)-related molecules. In Vitis rotundifolia (Muscadine grape), this protein is Disease resistance protein RUN1.